A 160-amino-acid polypeptide reads, in one-letter code: Large ribosomal subunit protein eL21B (160 aa).

The interval 114–140 (AKRKEAKAQGKTVQLRRQPAPPATAHF) is disordered.

It belongs to the eukaryotic ribosomal protein eL21 family. As to quaternary structure, component of the large ribosomal subunit (LSU). Mature yeast ribosomes consist of a small (40S) and a large (60S) subunit. The 40S small subunit contains 1 molecule of ribosomal RNA (18S rRNA) and at least 33 different proteins. The large 60S subunit contains 3 rRNA molecules (25S, 5.8S and 5S rRNA) and at least 46 different proteins.

It localises to the cytoplasm. Component of the ribosome, a large ribonucleoprotein complex responsible for the synthesis of proteins in the cell. The small ribosomal subunit (SSU) binds messenger RNAs (mRNAs) and translates the encoded message by selecting cognate aminoacyl-transfer RNA (tRNA) molecules. The large subunit (LSU) contains the ribosomal catalytic site termed the peptidyl transferase center (PTC), which catalyzes the formation of peptide bonds, thereby polymerizing the amino acids delivered by tRNAs into a polypeptide chain. The nascent polypeptides leave the ribosome through a tunnel in the LSU and interact with protein factors that function in enzymatic processing, targeting, and the membrane insertion of nascent chains at the exit of the ribosomal tunnel. In Schizosaccharomyces pombe (strain 972 / ATCC 24843) (Fission yeast), this protein is Large ribosomal subunit protein eL21B (rpl2102).